The following is a 482-amino-acid chain: G-protein coupled receptor 37-like 1 (482 aa).

The signal sequence occupies residues 1–25; it reads MRWLWPLGVSLAVALAAGPERAPRG. Disordered stretches follow at residues 25–56 and 78–119; these read GVWL…AKGL and PTQP…VQNP. Topologically, residues 26–134 are extracellular; the sequence is VWLQQGGHQP…ERSYGAYAVL (109 aa). The span at 40 to 54 shows a compositional bias: basic and acidic residues; sequence QPDRSRRGAEREDAK. The N-linked (GlcNAc...) asparagine glycan is linked to N105. A helical membrane pass occupies residues 135-155; sequence LLALLLFAVGIVGSLAVMCIV. Residues 156-167 are Cytoplasmic-facing; the sequence is WHSYYLKSAWNS. Residues 168 to 188 traverse the membrane as a helical segment; the sequence is VLASLALWDFLVLFFCLPVVT. The Extracellular portion of the chain corresponds to 189–205; the sequence is FHEITKQRLLGAVSCRA. A disulfide bridge links C203 with C286. A helical membrane pass occupies residues 206-226; it reads VPFVEVSSLGVTTFSLCALGI. Residues 227-251 lie on the Cytoplasmic side of the membrane; sequence DRFHVATSTLPKARPIEPCPSILAK. A helical transmembrane segment spans residues 252–272; sequence LAVIWVGSMTLAAPELLLWQL. At 273 to 310 the chain is on the extracellular side; that stretch reads VREPSPAAGTVDTCIMKPSAHLPESLYSLVLTYQNARM. A helical membrane pass occupies residues 311–331; the sequence is WWSFGCYFCLPVLFTVTCQLV. The Cytoplasmic segment spans residues 332–361; that stretch reads TWRVRGTPGRKPESRPGPQEPRGARPSSTV. Residues 338-358 form a disordered region; it reads TPGRKPESRPGPQEPRGARPS. Residues 362–382 traverse the membrane as a helical segment; it reads AGLAAVHALCALPENVCNVVA. Residues 383-398 lie on the Extracellular side of the membrane; that stretch reads AYLSAALTRQTLELLG. Residues 399 to 419 traverse the membrane as a helical segment; it reads LVTQFSTFFKAALTPLLLLCV. At 420 to 482 the chain is on the cytoplasmic side; the sequence is SRPLGRAFLD…PPLLALGTPC (63 aa). T480 is subject to Phosphothreonine.

This sequence belongs to the G-protein coupled receptor 1 family. As to quaternary structure, interacts with the PTCH1 receptor. Post-translationally, undergoes metalloprotease-mediated cleavage which reduces its constitutive activity. In terms of processing, ubiquitinated.

The protein resides in the cell membrane. It localises to the cell projection. Its subcellular location is the cilium membrane. Its function is as follows. G-protein coupled receptor. Has been shown to bind the neuroprotective and glioprotective factor prosaposin (PSAP), leading to endocytosis followed by an ERK phosphorylation cascade. However, other studies have shown that prosaposin does not increase activity. It has been suggested that GPR37L1 is a constitutively active receptor which signals through the guanine nucleotide-binding protein G(s) subunit alpha. Participates in the regulation of postnatal cerebellar development by modulating the Shh pathway. Regulates baseline blood pressure in females and protects against cardiovascular stress in males. Mediates inhibition of astrocyte glutamate transporters and reduction in neuronal N-methyl-D-aspartate receptor activity. The protein is G-protein coupled receptor 37-like 1 (GPR37L1) of Bos taurus (Bovine).